The primary structure comprises 440 residues: MPIPPPPPPPPGPPPPPTFNQANTEQPKLSRDEQRNRGALLQDICKGTKLKKVTNVNDRSAPVIEKPRGSSGGYGPGAAALQPKGGLFQGGVPKLRPVGAKDASEAPAGKPALQVPSSRAAAPRPPGSAASGRPHDDTDSNRASLPELPRMQRPSLPDLSRPNTASGTGMKHSSSAPPPPPPGRRANAPPTPLPLHSNKAQAYNREKPLPPTPGQRLHPGREGHPAPPPVKPPPSPVNIRTGPSGQSLAPPPPPYRQPPGVPNGPSSPTNESAPELPQRHNSLHRKTPGPVRGLAPPPPTSATPSLLSNRPPPPAREPPSRGAAPPPPPPMIRNGARDAPPPPPPYRMHGSEPPSRGKPPPPPSRTPAGPPPPPPPPLRNGHRDSITTVRSFLDDFESKYSFHPVEDFPAPEEYKHLQRVYPSKTNRAARGAPPLPPILR.

Pro residues predominate over residues 1 to 18; the sequence is MPIPPPPPPPPGPPPPPT. Residues 1–38 form a disordered region; it reads MPIPPPPPPPPGPPPPPTFNQANTEQPKLSRDEQRNRG. One can recognise a WH2 domain in the interval 36–53; the sequence is NRGALLQDICKGTKLKKV. Arg37 carries the post-translational modification Asymmetric dimethylarginine. Positions 49–52 are binds actin; it reads KLKK. 2 disordered regions span residues 56–386 and 419–440; these read VNDR…RDSI and RVYPSKTNRAARGAPPLPPILR. The segment covering 116 to 132 has biased composition (low complexity); sequence PSSRAAAPRPPGSAASG. 4 stretches are compositionally biased toward pro residues: residues 176-193, 225-236, 249-262, and 356-378; these read APPPPPPGRRANAPPTPL, PAPPPVKPPPSP, APPPPPYRQPPGVP, and RGKPPPPPSRTPAGPPPPPPPPL.

The protein belongs to the verprolin family. In terms of assembly, interacts with WASL and WASP, and this interaction results in cytoplasmic relocation of these two proteins along actin filaments. Interacts with NCK2 resulting in the localization to sites of focal adhesions.

The protein resides in the cytoplasm. It localises to the cytoskeleton. In terms of biological role, plays an active role in the formation of cell surface protrusions downstream of activated PDGFB receptors. Plays an important role in actin-microspike formation through cooperation with WASL. May cooperate with WASP and WASL to induce mobilization and reorganization of the actin filament system. The sequence is that of WAS/WASL-interacting protein family member 2 (Wipf2) from Mus musculus (Mouse).